Reading from the N-terminus, the 236-residue chain is H2HPP isomerase (236 aa).

2 consecutive Cupin type-1 domains span residues 40–106 and 151–215; these read YVPP…AIDI and NIPG…SKSV. A divalent metal cation is bound by residues H50, H52, Q56, H91, H162, H164, Q168, and H202. A substrate-binding site is contributed by Y223.

Monomer. It depends on Fe(2+) as a cofactor. Co(2+) serves as cofactor.

It localises to the cytoplasm. The catalysed reaction is 3-[(4R)-4-hydroxycyclohexa-1,5-dien-1-yl]-2-oxopropanoate = 3-[(1E,4R)-4-hydroxycyclohex-2-en-1-ylidene]pyruvate. It participates in antibiotic biosynthesis; bacilysin biosynthesis. In terms of biological role, part of the bacABCDEF operon responsible for the biosynthesis of the nonribosomally synthesized dipeptide antibiotic bacilysin, composed of L-alanine and L-anticapsin. Bacilysin is an irreversible inactivator of the glutaminase domain of glucosamine synthetase. BacB catalyzes the allylic isomerization of the endocyclic-delta(4),delta(8)-7R-dihydro-hydroxyphenylpyruvate (en-H2HPP) to generate a mixture of 3E,7R- and 3Z, 7R-olefins of the exocyclic-delta(3),delta(5)-dihydro-hydroxyphenylpyruvate (ex-H2HPP). The sequence is that of H2HPP isomerase from Bacillus subtilis.